The following is a 154-amino-acid chain: Aspartate carbamoyltransferase regulatory chain (154 aa).

Residues C109, C114, C138, and C141 each coordinate Zn(2+).

It belongs to the PyrI family. In terms of assembly, contains catalytic and regulatory chains. Zn(2+) is required as a cofactor.

Involved in allosteric regulation of aspartate carbamoyltransferase. The polypeptide is Aspartate carbamoyltransferase regulatory chain (Yersinia enterocolitica serotype O:8 / biotype 1B (strain NCTC 13174 / 8081)).